The following is a 178-amino-acid chain: ATP synthase subunit delta (178 aa).

This sequence belongs to the ATPase delta chain family. As to quaternary structure, F-type ATPases have 2 components, F(1) - the catalytic core - and F(0) - the membrane proton channel. F(1) has five subunits: alpha(3), beta(3), gamma(1), delta(1), epsilon(1). F(0) has three main subunits: a(1), b(2) and c(10-14). The alpha and beta chains form an alternating ring which encloses part of the gamma chain. F(1) is attached to F(0) by a central stalk formed by the gamma and epsilon chains, while a peripheral stalk is formed by the delta and b chains.

The protein resides in the cell inner membrane. Its function is as follows. F(1)F(0) ATP synthase produces ATP from ADP in the presence of a proton or sodium gradient. F-type ATPases consist of two structural domains, F(1) containing the extramembraneous catalytic core and F(0) containing the membrane proton channel, linked together by a central stalk and a peripheral stalk. During catalysis, ATP synthesis in the catalytic domain of F(1) is coupled via a rotary mechanism of the central stalk subunits to proton translocation. Functionally, this protein is part of the stalk that links CF(0) to CF(1). It either transmits conformational changes from CF(0) to CF(1) or is implicated in proton conduction. This Pseudomonas entomophila (strain L48) protein is ATP synthase subunit delta.